The chain runs to 157 residues: ATP synthase subunit b' (157 aa).

A helical transmembrane segment spans residues 22–42 (ATLPLIAIQFLLLVAVLNSLF).

It belongs to the ATPase B chain family. F-type ATPases have 2 components, F(1) - the catalytic core - and F(0) - the membrane proton channel. F(1) has five subunits: alpha(3), beta(3), gamma(1), delta(1), epsilon(1). F(0) has four main subunits: a(1), b(1), b'(1) and c(10-14). The alpha and beta chains form an alternating ring which encloses part of the gamma chain. F(1) is attached to F(0) by a central stalk formed by the gamma and epsilon chains, while a peripheral stalk is formed by the delta, b and b' chains.

Its subcellular location is the cellular thylakoid membrane. In terms of biological role, f(1)F(0) ATP synthase produces ATP from ADP in the presence of a proton or sodium gradient. F-type ATPases consist of two structural domains, F(1) containing the extramembraneous catalytic core and F(0) containing the membrane proton channel, linked together by a central stalk and a peripheral stalk. During catalysis, ATP synthesis in the catalytic domain of F(1) is coupled via a rotary mechanism of the central stalk subunits to proton translocation. Component of the F(0) channel, it forms part of the peripheral stalk, linking F(1) to F(0). The b'-subunit is a diverged and duplicated form of b found in plants and photosynthetic bacteria. This is ATP synthase subunit b' from Synechococcus sp. (strain JA-2-3B'a(2-13)) (Cyanobacteria bacterium Yellowstone B-Prime).